We begin with the raw amino-acid sequence, 208 residues long: Histone H1.3 (208 aa).

Residue S2 is modified to N-acetylserine. The H15 domain maps to 37–113 (AHPPYINMVT…GASGRFRVTE (77 aa)). A disordered region spans residues 113–208 (EKKAAAAKKP…PAKKAVAPKT (96 aa)). 2 stretches are compositionally biased toward basic residues: residues 148–158 (KAKKTTATKTK) and 165–191 (KKVK…KSAP). A compositionally biased stretch (low complexity) spans 192-208 (KKAAAAKPAKKAVAPKT).

It belongs to the histone H1/H5 family.

Its subcellular location is the nucleus. The protein localises to the chromosome. Histones H1 are necessary for the condensation of nucleosome chains into higher-order structures. This is Histone H1.3 (hil-3) from Caenorhabditis elegans.